The chain runs to 131 residues: UPF0102 protein YraN (131 aa).

It belongs to the UPF0102 family.

The polypeptide is UPF0102 protein YraN (Salmonella typhi).